The chain runs to 209 residues: Imidazole glycerol phosphate synthase subunit HisH (209 aa).

The 205-residue stretch at 1–205 (MIAIIDYGMG…QGVVEAWKSS (205 aa)) folds into the Glutamine amidotransferase type-1 domain. The active-site Nucleophile is C79. Residues H180 and E182 contribute to the active site.

In terms of assembly, heterodimer of HisH and HisF.

The protein localises to the cytoplasm. The catalysed reaction is 5-[(5-phospho-1-deoxy-D-ribulos-1-ylimino)methylamino]-1-(5-phospho-beta-D-ribosyl)imidazole-4-carboxamide + L-glutamine = D-erythro-1-(imidazol-4-yl)glycerol 3-phosphate + 5-amino-1-(5-phospho-beta-D-ribosyl)imidazole-4-carboxamide + L-glutamate + H(+). It carries out the reaction L-glutamine + H2O = L-glutamate + NH4(+). The protein operates within amino-acid biosynthesis; L-histidine biosynthesis; L-histidine from 5-phospho-alpha-D-ribose 1-diphosphate: step 5/9. IGPS catalyzes the conversion of PRFAR and glutamine to IGP, AICAR and glutamate. The HisH subunit catalyzes the hydrolysis of glutamine to glutamate and ammonia as part of the synthesis of IGP and AICAR. The resulting ammonia molecule is channeled to the active site of HisF. This is Imidazole glycerol phosphate synthase subunit HisH from Bacillus cereus (strain B4264).